We begin with the raw amino-acid sequence, 176 residues long: Ribosome maturation factor RimM (176 aa).

In terms of domain architecture, PRC barrel spans 100-172; it reads PDTYYDHQLV…IVEIDPPHGL (73 aa).

Belongs to the RimM family. In terms of assembly, binds ribosomal protein uS19.

The protein localises to the cytoplasm. In terms of biological role, an accessory protein needed during the final step in the assembly of 30S ribosomal subunit, possibly for assembly of the head region. Essential for efficient processing of 16S rRNA. May be needed both before and after RbfA during the maturation of 16S rRNA. It has affinity for free ribosomal 30S subunits but not for 70S ribosomes. In Mycobacterium bovis (strain ATCC BAA-935 / AF2122/97), this protein is Ribosome maturation factor RimM.